The following is a 66-amino-acid chain: Large ribosomal subunit protein bL35 (66 aa).

This sequence belongs to the bacterial ribosomal protein bL35 family.

This Brucella canis (strain ATCC 23365 / NCTC 10854 / RM-666) protein is Large ribosomal subunit protein bL35.